A 511-amino-acid chain; its full sequence is 2-isopropylmalate synthase (511 aa).

The 263-residue stretch at Leu-5–Leu-267 folds into the Pyruvate carboxyltransferase domain. Residues Asp-14, His-202, His-204, and Asn-238 each contribute to the Mn(2+) site. Residues Lys-392 to Ile-511 form a regulatory domain region.

The protein belongs to the alpha-IPM synthase/homocitrate synthase family. LeuA type 1 subfamily. Homodimer. The cofactor is Mn(2+).

Its subcellular location is the cytoplasm. It carries out the reaction 3-methyl-2-oxobutanoate + acetyl-CoA + H2O = (2S)-2-isopropylmalate + CoA + H(+). It functions in the pathway amino-acid biosynthesis; L-leucine biosynthesis; L-leucine from 3-methyl-2-oxobutanoate: step 1/4. Functionally, catalyzes the condensation of the acetyl group of acetyl-CoA with 3-methyl-2-oxobutanoate (2-ketoisovalerate) to form 3-carboxy-3-hydroxy-4-methylpentanoate (2-isopropylmalate). In Ruthia magnifica subsp. Calyptogena magnifica, this protein is 2-isopropylmalate synthase.